The primary structure comprises 389 residues: Lipid-A-disaccharide synthase (389 aa).

This sequence belongs to the LpxB family.

The enzyme catalyses a lipid X + a UDP-2-N,3-O-bis[(3R)-3-hydroxyacyl]-alpha-D-glucosamine = a lipid A disaccharide + UDP + H(+). It participates in bacterial outer membrane biogenesis; LPS lipid A biosynthesis. Functionally, condensation of UDP-2,3-diacylglucosamine and 2,3-diacylglucosamine-1-phosphate to form lipid A disaccharide, a precursor of lipid A, a phosphorylated glycolipid that anchors the lipopolysaccharide to the outer membrane of the cell. This is Lipid-A-disaccharide synthase from Histophilus somni (strain 2336) (Haemophilus somnus).